A 235-amino-acid chain; its full sequence is Small ribosomal subunit protein uS2 (235 aa).

This sequence belongs to the universal ribosomal protein uS2 family.

This chain is Small ribosomal subunit protein uS2, found in Geobacillus kaustophilus (strain HTA426).